Reading from the N-terminus, the 281-residue chain is NADPH-dependent 7-cyano-7-deazaguanine reductase (281 aa).

A substrate-binding site is contributed by 88–90 (VES). 90–91 (SK) lines the NADPH pocket. The active-site Thioimide intermediate is cysteine 189. Aspartate 196 (proton donor) is an active-site residue. Residue 228-229 (HE) participates in substrate binding. 257 to 258 (RG) is an NADPH binding site.

This sequence belongs to the GTP cyclohydrolase I family. QueF type 2 subfamily. As to quaternary structure, homodimer.

It is found in the cytoplasm. It catalyses the reaction 7-aminomethyl-7-carbaguanine + 2 NADP(+) = 7-cyano-7-deazaguanine + 2 NADPH + 3 H(+). Its pathway is tRNA modification; tRNA-queuosine biosynthesis. Functionally, catalyzes the NADPH-dependent reduction of 7-cyano-7-deazaguanine (preQ0) to 7-aminomethyl-7-deazaguanine (preQ1). In Klebsiella pneumoniae (strain 342), this protein is NADPH-dependent 7-cyano-7-deazaguanine reductase.